The sequence spans 522 residues: Cytochrome P450 monooxygenase FGSG_08207 (522 aa).

A helical membrane pass occupies residues 10–30 (LLLSKPVVLGLAACALLFLIG). N-linked (GlcNAc...) asparagine glycans are attached at residues N104 and N155. C441 contributes to the heme binding site.

This sequence belongs to the cytochrome P450 family. The cofactor is heme.

Its subcellular location is the membrane. Its pathway is secondary metabolite biosynthesis. Its function is as follows. Cytochrome P450 monooxygenase; part of the gene cluster that mediates the biosynthesis of the lipopeptide fusaristatin A. Fusaristatin A consists of a polyketide chain linked to three amino acid residues glutamine (Gln), dehydroalanine (dehydro-Ala), and beta-aminoisobutyric acid. The biosynthesis starts with formation of a linear polyketide chain by the highly reducing polyketide synthase PKS6. The gene cluster does not contain an acyl-CoA ligase or an acyl-transferase, and it is therefore predicted that the polyketide is transferred directly to the nonribosomal peptide synthetase NRPS7. Modules 1-3 from NRPS7 incorporate dehydro-Ala, Gln, and beta-aminoisobutyric acid in the compound, which is released by cyclization. The beta-aminoisobutyric acid units are most likely not freely available to the NRPS, but can be synthesized from thymine, which requires a dehydrogenase, a monooxygenase, and an aminotransferase. The fusaristatin A cluster contains a cytochrome P450 monooxygenase (FGSG_08207) and an aminotransferase (FGSG_17085), which theoretically can perform two of the enzymatic steps. The enzymes may however also be involved in biosynthesis of dehydroalanine or modification of the polyketide. The dehydro-Ala residue can be a result of cyclization, where serine is dehydrated. The last gene of the cluster encodes a protein with an A/B barrel domain found in variable enzymes, which hampers functional prediction. This is Cytochrome P450 monooxygenase FGSG_08207 from Gibberella zeae (strain ATCC MYA-4620 / CBS 123657 / FGSC 9075 / NRRL 31084 / PH-1) (Wheat head blight fungus).